Consider the following 70-residue polypeptide: Large ribosomal subunit protein bL31 (70 aa).

Positions 16, 18, 38, and 41 each coordinate Zn(2+).

Belongs to the bacterial ribosomal protein bL31 family. Type A subfamily. Part of the 50S ribosomal subunit. The cofactor is Zn(2+).

Its function is as follows. Binds the 23S rRNA. This chain is Large ribosomal subunit protein bL31, found in Bifidobacterium longum (strain DJO10A).